Here is a 419-residue protein sequence, read N- to C-terminus: Aminoacyltransferase FemB (419 aa).

The protein belongs to the FemABX family. Homodimer. Interacts with FemA.

It is found in the cytoplasm. It catalyses the reaction MurNAc-L-Ala-D-isoglutaminyl-L-Lys-(N(6)-tri-Gly)-D-Ala-D-Ala-diphospho-di-trans,octa-cis-undecaprenyl-GlcNAc + 2 glycyl-tRNA(Gly) = MurNAc-L-Ala-D-isoglutaminyl-L-Lys-(N(6)-penta-Gly)-D-Ala-D-Ala-diphospho-di-trans,octa-cis-undecaprenyl-GlcNAc + 2 tRNA(Gly) + 2 H(+). Catalyzes the formation of the pentaglycine interpeptide bridge, which is characteristic of the S.aureus peptidoglycan. Adds glycines 4 and 5 of the pentaglycine bridge, using glycyl-tRNA(Gly) as donor. Involved in resistance to methicillin. The chain is Aminoacyltransferase FemB (femB) from Staphylococcus aureus (strain NCTC 8325 / PS 47).